Reading from the N-terminus, the 700-residue chain is Elongation factor G 2 (700 aa).

The region spanning E8–I290 is the tr-type G domain. Residues A17–T24, D88–H92, and N142–D145 contribute to the GTP site.

The protein belongs to the TRAFAC class translation factor GTPase superfamily. Classic translation factor GTPase family. EF-G/EF-2 subfamily.

The protein localises to the cytoplasm. Catalyzes the GTP-dependent ribosomal translocation step during translation elongation. During this step, the ribosome changes from the pre-translocational (PRE) to the post-translocational (POST) state as the newly formed A-site-bound peptidyl-tRNA and P-site-bound deacylated tRNA move to the P and E sites, respectively. Catalyzes the coordinated movement of the two tRNA molecules, the mRNA and conformational changes in the ribosome. The protein is Elongation factor G 2 of Paraburkholderia xenovorans (strain LB400).